The following is a 67-amino-acid chain: Large ribosomal subunit protein bL31 (67 aa).

Residues Cys16, Cys18, Cys36, and Cys39 each contribute to the Zn(2+) site.

This sequence belongs to the bacterial ribosomal protein bL31 family. Type A subfamily. Part of the 50S ribosomal subunit. Requires Zn(2+) as cofactor.

Functionally, binds the 23S rRNA. This is Large ribosomal subunit protein bL31 from Syntrophomonas wolfei subsp. wolfei (strain DSM 2245B / Goettingen).